The sequence spans 788 residues: Cap-specific mRNA (nucleoside-2'-O-)-methyltransferase 1 (788 aa).

The G-patch domain occupies 25–71 (YSNKAMEMMKKMGYENDKGLGKSNQGRLEPIIAVQQDGRRGFGLKLD). Substrate-binding positions include 143–147 (KTVFD) and arginine 158. Residues 171 to 384 (IFLNRAAVKM…ERYLVCKYKR (214 aa)) enclose the RrmJ-type SAM-dependent 2'-O-MTase domain. Asparagine 174 contacts S-adenosyl-L-methionine. Lysine 179 is an active-site residue. Residue 215–221 (CAGPGGF) coordinates S-adenosyl-L-methionine. The active site involves aspartate 298. 308–310 (NIQ) contacts substrate. The active-site Proton acceptor is the lysine 338. Asparagine 373 serves as a coordination point for substrate.

Interacts (via C-terminus) with r2d2 (via C-terminus).

Its subcellular location is the nucleus. It localises to the cytoplasm. The enzyme catalyses a 5'-end (N(7)-methyl 5'-triphosphoguanosine)-ribonucleoside in mRNA + S-adenosyl-L-methionine = a 5'-end (N(7)-methyl 5'-triphosphoguanosine)-(2'-O-methyl-ribonucleoside) in mRNA + S-adenosyl-L-homocysteine + H(+). Functionally, S-adenosyl-L-methionine-dependent methyltransferase that mediates mRNA cap1 2'-O-ribose methylation to the 5'-cap structure of mRNAs. Methylates the ribose of the first nucleotide of a m(7)GpppG-capped mRNA to produce m(7)GpppNmp (cap1). Positively regulates the Ago2-dependent small RNA pathway, with roles in both siRNA biogenesis and RISC assembly. Involved in facilitating conversion of pre-RISC into holo-RISC, possibly by promoting the unwinding of Ago2-bound siRNA duplexes and thus the retention of the guide strand in holo-RISC. The protein is Cap-specific mRNA (nucleoside-2'-O-)-methyltransferase 1 of Drosophila melanogaster (Fruit fly).